The sequence spans 142 residues: Gonadotropin subunit beta-2 (142 aa).

An N-terminal signal peptide occupies residues 1–23 (MLGLHVGTLISLFLCILLEPIEG). Cystine bridges form between Cys-29-Cys-77, Cys-43-Cys-92, Cys-46-Cys-130, Cys-54-Cys-108, Cys-58-Cys-110, and Cys-113-Cys-120. N-linked (GlcNAc...) asparagine glycosylation occurs at Asn-33.

This sequence belongs to the glycoprotein hormones subunit beta family. As to quaternary structure, heterodimer of an alpha and a beta chain.

The protein resides in the secreted. Involved in gametogenesis and steroidogenesis. This is Gonadotropin subunit beta-2 (cgbb) from Oncorhynchus tshawytscha (Chinook salmon).